Here is a 246-residue protein sequence, read N- to C-terminus: Ribosomal RNA small subunit methyltransferase G (246 aa).

S-adenosyl-L-methionine contacts are provided by residues G81, F86, 137–138 (AE), and R156. Positions 221-246 (LVLIRKERPTPKAYPRRAGVPAKSPL) are disordered.

Belongs to the methyltransferase superfamily. RNA methyltransferase RsmG family.

It localises to the cytoplasm. Functionally, specifically methylates the N7 position of a guanine in 16S rRNA. This is Ribosomal RNA small subunit methyltransferase G from Symbiobacterium thermophilum (strain DSM 24528 / JCM 14929 / IAM 14863 / T).